The following is a 297-amino-acid chain: HTH-type transcriptional regulator ArgP (297 aa).

The 57-residue stretch at 4-60 folds into the HTH lysR-type domain; the sequence is PDYRTLQALDAVIRERGFERAAQKLCITQSAVSQRIKQLENLFGQPLLVRTVPPRPT. A DNA-binding region (H-T-H motif) is located at residues 21–40; the sequence is FERAAQKLCITQSAVSQRIK.

The protein belongs to the LysR transcriptional regulatory family. As to quaternary structure, homodimer.

In terms of biological role, controls the transcription of genes involved in arginine and lysine metabolism. This chain is HTH-type transcriptional regulator ArgP, found in Serratia proteamaculans (strain 568).